Reading from the N-terminus, the 287-residue chain is Polyamine aminopropyltransferase (287 aa).

The region spanning 5-238 is the PABS domain; it reads EIWYETLHAN…GIMTFAWASN (234 aa). An S-methyl-5'-thioadenosine-binding site is contributed by glutamine 33. Residues histidine 64 and aspartate 88 each coordinate spermidine. S-methyl-5'-thioadenosine is bound by residues glutamate 108 and 140 to 141; that span reads DG. The active-site Proton acceptor is aspartate 158. 158–161 contributes to the spermidine binding site; the sequence is DCTD. Proline 165 lines the S-methyl-5'-thioadenosine pocket.

Belongs to the spermidine/spermine synthase family. In terms of assembly, homodimer or homotetramer.

The protein resides in the cytoplasm. It carries out the reaction S-adenosyl 3-(methylsulfanyl)propylamine + putrescine = S-methyl-5'-thioadenosine + spermidine + H(+). It participates in amine and polyamine biosynthesis; spermidine biosynthesis; spermidine from putrescine: step 1/1. Catalyzes the irreversible transfer of a propylamine group from the amino donor S-adenosylmethioninamine (decarboxy-AdoMet) to putrescine (1,4-diaminobutane) to yield spermidine. The chain is Polyamine aminopropyltransferase from Pectobacterium atrosepticum (strain SCRI 1043 / ATCC BAA-672) (Erwinia carotovora subsp. atroseptica).